The chain runs to 1090 residues: Protein transport protein Sec24A (1090 aa).

Disordered regions lie at residues 1-260 (MAQP…AHNT) and 272-325 (TPQL…TQTP). The span at 8-28 (AARGAAASLQAQNGAASASGS) shows a compositional bias: low complexity. Polar residues-rich tracts occupy residues 29-55 (PYTN…SQPP), 138-151 (WQYN…QTNH), and 162-184 (GNPN…QTSF). The span at 194-236 (QNPPLPPTFQPGAPPGPPPAGGPPPSRGPAPQKTPPRAAPPPS) shows a compositional bias: pro residues. Polar residues-rich tracts occupy residues 237 to 258 (FNSA…TAAH), 274 to 286 (QLVN…SRSV), and 313 to 325 (SYPS…TQTP). Zn(2+)-binding residues include cysteine 428, cysteine 431, cysteine 449, and cysteine 452. Residues 428-452 (CRSCRTYINPFVNFLDQRRWKCNLC) form a zinc finger-like region. One copy of the Gelsolin-like repeat lies at 963–1036 (PQPPILQLSV…PESARIAAFI (74 aa)).

The protein belongs to the SEC23/SEC24 family. SEC24 subfamily. As to quaternary structure, COPII is composed of at least five proteins: the Sec23/24 complex, the Sec13/31 complex and Sar1. Interacts with TMED2. Interacts (as part of the Sec23/24 complex) with SEC22B; recruits SEC22B into COPII-coated vesicles for its transport from the endoplasmic reticulum to the Golgi. Interacts with STING1; promoting STING1 translocation to COPII vesicles in a STEEP1-dependent manner. Interacts with TMEM39A. Interacts with SACM1L; this interaction is reduced in the absence of TMEM39A. Interacts with kinase FAM20C; transport of FAM20C from the endoplasmic reticulum to the Golgi is likely to be mediated by COPII vesicles.

The protein resides in the cytoplasmic vesicle. Its subcellular location is the COPII-coated vesicle membrane. The protein localises to the endoplasmic reticulum membrane. It localises to the cytoplasm. It is found in the cytosol. Functionally, component of the coat protein complex II (COPII) which promotes the formation of transport vesicles from the endoplasmic reticulum (ER). The coat has two main functions, the physical deformation of the endoplasmic reticulum membrane into vesicles and the selection of cargo molecules for their transport to the Golgi complex. Plays a central role in cargo selection within the COPII complex and together with SEC24B may have a different specificity compared to SEC24C and SEC24D. May package preferentially cargos with cytoplasmic DxE or LxxLE motifs and may also recognize conformational epitopes. In Mus musculus (Mouse), this protein is Protein transport protein Sec24A.